Here is a 1425-residue protein sequence, read N- to C-terminus: B-cell CLL/lymphoma 9 protein (1425 aa).

Residues 1–172 form a disordered region; sequence MHPSNPKVRS…APEPISAQKT (172 aa). Composition is skewed to polar residues over residues 7–21 and 34–48; these read KVRS…SSPK and MSPS…KFSN. Low complexity predominate over residues 54–63; the sequence is GSASQSQPSP. Over residues 78-94 the composition is skewed to gly residues; that stretch reads GPGGSMGLKNGAGNGAK. Composition is skewed to basic and acidic residues over residues 100 to 112 and 120 to 135; these read ERSI…DQRD and SDIK…KSQE. A Phosphoserine modification is found at Ser-104. The span at 144–157 shows a compositional bias: low complexity; sequence TPSTATAPRSSTPS. At Ser-157 the chain carries Phosphoserine. Residue Thr-172 is modified to Phosphothreonine. The interaction with PYGO1 stretch occupies residues 177 to 205; it reads VYVFSTEMANKAAEAVLKGQVETIVSFHI. Polar residues predominate over residues 207–226; that stretch reads NISNSKSERSTAPLNTQIPT. Disordered regions lie at residues 207–441 and 577–624; these read NISN…VPFS and VPNP…PNPQ. 2 stretches are compositionally biased toward pro residues: residues 232 to 241 and 256 to 270; these read KPLPQQPPAP and PTPP…PTAA. Over residues 304–320 the composition is skewed to polar residues; sequence GPNSTPNNRAVTPVSQG. Residue Thr-315 is modified to Phosphothreonine. Residues Ser-318 and Ser-352 each carry the phosphoserine modification. Positions 355–380 are enriched in basic and acidic residues; the sequence is QLEHRERSLQTLRDIQRMLFPDEKEF. The segment at 358–374 is interaction with CTNNB1; it reads HRERSLQTLRDIQRMLF. 2 positions are modified to phosphoserine: Ser-686 and Ser-688. Disordered regions lie at residues 781–1003, 1031–1051, 1153–1199, and 1252–1275; these read RPFL…LSQN, VASS…SMNS, PHNG…GPGA, and PRGE…MQGM. Position 800 is an asymmetric dimethylarginine (Arg-800). A compositionally biased stretch (low complexity) spans 822–835; sequence NPSSNPTSLSTAPP. Lys-843 carries the N6-acetyllysine modification. The segment covering 866 to 890 has biased composition (polar residues); it reads TMHQVQSPMLGSPSGNLKSPQTPSQ. Residues 891–902 are compositionally biased toward low complexity; that stretch reads LAGMLAGPAAAA. Phosphoserine occurs at positions 906 and 916. The span at 936–946 shows a compositional bias: pro residues; the sequence is PKPPLQSPGIP. A compositionally biased stretch (gly residues) spans 1157–1175; the sequence is PTGGQGNFPGGIGFPGEGP.

Belongs to the BCL9 family. In terms of assembly, binds to beta-catenin (CTNNB1), PYGO1 and PYGO2; the interaction with PYGO1 increases PYGO1 affinity to histone H3 methylated at 'Lys 4'.

The protein localises to the nucleus. Promotes beta-catenin's transcriptional activity. Involved in signal transduction through the Wnt pathway. The chain is B-cell CLL/lymphoma 9 protein (Bcl9) from Mus musculus (Mouse).